A 655-amino-acid chain; its full sequence is SRSF protein kinase 1 (655 aa).

Residues 1–57 form a disordered region; it reads MERKVLALQARKKRTKAKKDKAQRKPETQHRGSAPHSESDLPEQEEEILGSDDDEQE. Basic residues predominate over residues 10-22; the sequence is ARKKRTKAKKDKA. Acidic residues predominate over residues 40 to 57; it reads DLPEQEEEILGSDDDEQE. Position 51 is a phosphoserine; by CK2 (serine 51). The Protein kinase domain occupies 80–653; the sequence is YHVIRKLGWG…AAECLRHPWL (574 aa). ATP is bound by residues 86–94 and lysine 109; that span reads LGWGHFSTV. The active-site Proton acceptor is aspartate 213. Disordered stretches follow at residues 238–341 and 397–417; these read WQRS…QDQT and FLSSQNGDSSTSQETDSCTPI. Basic residues predominate over residues 265 to 276; sequence KNKKKKLKKKQK. Composition is skewed to basic and acidic residues over residues 277-288 and 304-318; these read RQAELLEKRMQE and NKQEESESPVERPLK. 3 positions are modified to phosphoserine: serine 309, serine 311, and serine 333. Serine 555 is modified (phosphoserine; by CK2).

This sequence belongs to the protein kinase superfamily. CMGC Ser/Thr protein kinase family. As to quaternary structure, monomer. Found in a multisubunit complex containing seven proteins, named toposome, which separates entangled circular chromatin DNA during chromosome segregation. Interacts with HHV-1 ICP27 protein. Interacts with DNAJC8 and AHSA1/AHA1 and this mediates formation of a complex with the Hsp70 /Hsp90 machinery. Binds to IGF2BP1, SYNCRIP, HNRNPA2B1 and HNRNPC. Interacts with SAFB/SAFB1 and SAFB2 which inhibits its activity. The cofactor is Mg(2+).

The protein localises to the cytoplasm. Its subcellular location is the nucleus. It is found in the nucleoplasm. The protein resides in the nucleus matrix. It localises to the microsome. The protein localises to the nucleus speckle. Its subcellular location is the chromosome. It catalyses the reaction L-seryl-[protein] + ATP = O-phospho-L-seryl-[protein] + ADP + H(+). It carries out the reaction L-threonyl-[protein] + ATP = O-phospho-L-threonyl-[protein] + ADP + H(+). Its activity is regulated as follows. Activated by phosphorylation on Ser-51 and Ser-555. Its function is as follows. Serine/arginine-rich protein-specific kinase which specifically phosphorylates its substrates at serine residues located in regions rich in arginine/serine dipeptides, known as RS domains and is involved in the phosphorylation of SR splicing factors and the regulation of splicing. Plays a central role in the regulatory network for splicing, controlling the intranuclear distribution of splicing factors in interphase cells and the reorganization of nuclear speckles during mitosis. Can influence additional steps of mRNA maturation, as well as other cellular activities, such as chromatin reorganization in somatic and sperm cells and cell cycle progression. Phosphorylates SFRS2, ZRSR2, LBR and PRM1. Phosphorylates SRSF1 using a directional (C-terminal to N-terminal) and a dual-track mechanism incorporating both processive phosphorylation (in which the kinase stays attached to the substrate after each round of phosphorylation) and distributive phosphorylation steps (in which the kinase and substrate dissociate after each phosphorylation event). The RS domain of SRSF1 binds first to a docking groove in the large lobe of the kinase domain of SRPK1. This induces certain structural changes in SRPK1 and/or RRM2 domain of SRSF1, allowing RRM2 to bind the kinase and initiate phosphorylation. The cycles continue for several phosphorylation steps in a processive manner (steps 1-8) until the last few phosphorylation steps (approximately steps 9-12). During that time, a mechanical stress induces the unfolding of the beta-4 motif in RRM2, which then docks at the docking groove of SRPK1. This also signals RRM2 to begin to dissociate, which facilitates SRSF1 dissociation after phosphorylation is completed. Can mediate hepatitis B virus (HBV) core protein phosphorylation. It plays a negative role in the regulation of HBV replication through a mechanism not involving the phosphorylation of the core protein but by reducing the packaging efficiency of the pregenomic RNA (pgRNA) without affecting the formation of the viral core particles. Can induce splicing of exon 10 in MAPT/TAU. This chain is SRSF protein kinase 1, found in Pongo abelii (Sumatran orangutan).